Consider the following 289-residue polypeptide: Acetyl-coenzyme A carboxylase carboxyl transferase subunit beta (289 aa).

A CoA carboxyltransferase N-terminal domain is found at 24–289; it reads LWTNCESCGQ…RQKTVSDAAA (266 aa). Residues cysteine 28, cysteine 31, cysteine 47, and cysteine 50 each contribute to the Zn(2+) site. The segment at 28 to 50 adopts a C4-type zinc-finger fold; sequence CESCGQMMLTKELERSEKVCPHC.

Belongs to the AccD/PCCB family. Acetyl-CoA carboxylase is a heterohexamer composed of biotin carboxyl carrier protein (AccB), biotin carboxylase (AccC) and two subunits each of ACCase subunit alpha (AccA) and ACCase subunit beta (AccD). It depends on Zn(2+) as a cofactor.

The protein localises to the cytoplasm. It carries out the reaction N(6)-carboxybiotinyl-L-lysyl-[protein] + acetyl-CoA = N(6)-biotinyl-L-lysyl-[protein] + malonyl-CoA. It participates in lipid metabolism; malonyl-CoA biosynthesis; malonyl-CoA from acetyl-CoA: step 1/1. Component of the acetyl coenzyme A carboxylase (ACC) complex. Biotin carboxylase (BC) catalyzes the carboxylation of biotin on its carrier protein (BCCP) and then the CO(2) group is transferred by the transcarboxylase to acetyl-CoA to form malonyl-CoA. The sequence is that of Acetyl-coenzyme A carboxylase carboxyl transferase subunit beta from Gluconobacter oxydans (strain 621H) (Gluconobacter suboxydans).